A 274-amino-acid polypeptide reads, in one-letter code: Sulfur carrier protein FdhD (274 aa).

The active-site Cysteine persulfide intermediate is cysteine 121. Mo-bis(molybdopterin guanine dinucleotide) is bound at residue 258 to 263 (FSKPGR).

This sequence belongs to the FdhD family.

It is found in the cytoplasm. In terms of biological role, required for formate dehydrogenase (FDH) activity. Acts as a sulfur carrier protein that transfers sulfur from IscS to the molybdenum cofactor prior to its insertion into FDH. This is Sulfur carrier protein FdhD from Yersinia pestis bv. Antiqua (strain Antiqua).